A 433-amino-acid chain; its full sequence is Coiled-coil domain-containing protein 71 (433 aa).

Position 125 is a phosphoserine (Ser-125). 3 disordered regions span residues 204–256, 284–310, and 325–396; these read LKVR…GCSA, QTKT…KAAV, and KAAQ…RKSQ. Composition is skewed to basic residues over residues 216–230 and 288–306; these read KAPR…KHLT and VRVR…RAKA. Residues 260–330 adopt a coiled-coil conformation; sequence KTVQAQASQT…QAKAKAAQTK (71 aa).

This chain is Coiled-coil domain-containing protein 71 (Ccdc71), found in Mus musculus (Mouse).